The following is a 342-amino-acid chain: L-threonine 3-dehydrogenase (342 aa).

A Zn(2+)-binding site is contributed by Cys38. Catalysis depends on charge relay system residues Thr40 and His43. Residues His63, Glu64, Cys93, Cys96, Cys99, and Cys107 each contribute to the Zn(2+) site. Residues Ile175, Asp195, Arg200, Leu262–Ile264, and Ile286–Tyr287 each bind NAD(+).

Belongs to the zinc-containing alcohol dehydrogenase family. As to quaternary structure, homotetramer. Zn(2+) serves as cofactor.

Its subcellular location is the cytoplasm. The enzyme catalyses L-threonine + NAD(+) = (2S)-2-amino-3-oxobutanoate + NADH + H(+). Its pathway is amino-acid degradation; L-threonine degradation via oxydo-reductase pathway; glycine from L-threonine: step 1/2. Its function is as follows. Catalyzes the NAD(+)-dependent oxidation of L-threonine to 2-amino-3-ketobutyrate. This Burkholderia ambifaria (strain MC40-6) protein is L-threonine 3-dehydrogenase.